Reading from the N-terminus, the 434-residue chain is UPF0053 protein YrkA (434 aa).

The region spanning 1–201 (MTTINLIIFT…YKSGEINQNE (201 aa)) is the CNNM transmembrane domain. Helical transmembrane passes span 7–27 (IIFTLLIVLTAFFVATEFAIV), 64–84 (LGITVTALGIGWVGESTFEVI), and 101–121 (VLILVIAFVMATFLHVVVGEL). CBS domains lie at 220 to 282 (MIPR…KIKE) and 289 to 346 (HINP…IRDE).

The protein belongs to the UPF0053 family.

Its subcellular location is the cell membrane. This chain is UPF0053 protein YrkA (yrkA), found in Bacillus subtilis (strain 168).